Reading from the N-terminus, the 99-residue chain is Protein Frey (99 aa).

A helical membrane pass occupies residues 10–29; that stretch reads YPRAGLSLFLFYLILAGALL. The disordered stretch occupies residues 60–90; that stretch reads DYGLRPKHPRPGGPRPLLSQAQQRKRDGPNM.

Interacts with SPPL2C (via active sites); the interaction stabilizes FREY1 protein and inhibits SPPL2C proteolytic activity. Interacts with IZUMO1; the interaction retains IZUMO1 at the endoplasmic reticulum membrane and coordinates IZUMO1 complex assembly. As to expression, expressed in round spermatids (at protein level).

The protein localises to the endoplasmic reticulum membrane. Its function is as follows. Key regulator for male fertility expressed transiently in round spermatids where it recruits IZUMO1 at the endoplasmic reticulum (ER) membrane and coordinates the oolemmal binding multimeric complex (IZUMO1 complex) assembly. Upon complete assembly of the IZUMO1 complex, its ER retention is released, facilitating IZUMO1 complex export to the acrosome. Through the interaction with SPPL2C, inhibits its intramembrane protease activity directly accessing the catalytic center of an I-CLiP. The polypeptide is Protein Frey (Mus musculus (Mouse)).